A 148-amino-acid polypeptide reads, in one-letter code: Large ribosomal subunit protein uL15 (148 aa).

Residues 1 to 46 (MITIEDLKPTPGSNKKYKRLGRGQGSGKGKTAGKGHKGQKSRGTGK) form a disordered region. Residues 31–45 (TAGKGHKGQKSRGTG) show a composition bias toward basic residues.

Belongs to the universal ribosomal protein uL15 family. Part of the 50S ribosomal subunit.

Binds to the 23S rRNA. This chain is Large ribosomal subunit protein uL15, found in Fervidobacterium nodosum (strain ATCC 35602 / DSM 5306 / Rt17-B1).